A 241-amino-acid polypeptide reads, in one-letter code: Pyridoxal phosphate phosphatase PHOSPHO2 (241 aa).

Aspartate 8 acts as the Nucleophile in catalysis. Mg(2+)-binding residues include aspartate 8 and aspartate 10. Residue aspartate 10 is the Proton donor of the active site. Aspartate 19 and aspartate 99 together coordinate substrate. Aspartate 179 contacts Mg(2+).

The protein belongs to the HAD-like hydrolase superfamily. PHOSPHO family. Mg(2+) is required as a cofactor.

It catalyses the reaction pyridoxal 5'-phosphate + H2O = pyridoxal + phosphate. Functionally, phosphatase that has high activity toward pyridoxal 5'-phosphate (PLP). Also active at much lower level toward pyrophosphate, phosphoethanolamine (PEA), phosphocholine (PCho), phospho-l-tyrosine, fructose-6-phosphate, p-nitrophenyl phosphate, and h-glycerophosphate. The protein is Pyridoxal phosphate phosphatase PHOSPHO2 (Phospho2) of Mus musculus (Mouse).